Here is a 384-residue protein sequence, read N- to C-terminus: Putative aminohydrolase MTH_994 (384 aa).

H60, H62, H207, and D291 together coordinate Zn(2+).

This sequence belongs to the metallo-dependent hydrolases superfamily. ATZ/TRZ family.

This is Putative aminohydrolase MTH_994 from Methanothermobacter thermautotrophicus (strain ATCC 29096 / DSM 1053 / JCM 10044 / NBRC 100330 / Delta H) (Methanobacterium thermoautotrophicum).